We begin with the raw amino-acid sequence, 115 residues long: MPRRVLTGRVTSDKMDKTVTVLVDRRIIHPLYKKFIRKSKKYAAHDEANECREGDIVRIVECPPISKRKTWEVVWRNGHVLSTAHKEAIDAAATQIAHAEASGEAAAAAAEHQGA.

Belongs to the universal ribosomal protein uS17 family. Part of the 30S ribosomal subunit.

Functionally, one of the primary rRNA binding proteins, it binds specifically to the 5'-end of 16S ribosomal RNA. The sequence is that of Small ribosomal subunit protein uS17 from Granulibacter bethesdensis (strain ATCC BAA-1260 / CGDNIH1).